The sequence spans 787 residues: ABC transporter G family member 5 (787 aa).

Over residues 1-17 (MSRFVDKLPLFDRRPSP) the composition is skewed to basic and acidic residues. 2 disordered regions span residues 1–25 (MSRF…EGLP) and 71–116 (NDAR…EGQP). A compositionally biased stretch (polar residues) spans 74–85 (RSGSSTPISSPR). An ABC transporter domain is found at 121 to 382 (LKFTDLTYSV…FLDFGKPIPD (262 aa)). Position 175 to 182 (175 to 182 (GASGSGKS)) interacts with ATP. Positions 484 to 691 (GVLTRRAFIN…PYEAVMQNEF (208 aa)) constitute an ABC transmembrane type-2 domain. The next 8 helical transmembrane spans lie at 500 to 520 (VFII…TIFW), 535 to 555 (FFAI…PVFL), 576 to 596 (VLSH…AFAL), 599 to 619 (FFSV…AIVL), 620 to 640 (ASFW…THVM), 641 to 661 (LGFP…GFFI), 728 to 745 (SLGV…GPDF), and 760 to 780 (LWIT…SLLL).

The protein belongs to the ABC transporter superfamily. ABCG family. Eye pigment precursor importer (TC 3.A.1.204) subfamily. Expressed in the crown root primordia, endodermis, pericycle and stele in the root, in leaf primordia of main and axillary shoots, and in the vascular cells and leaf epidermis of older leaves.

Its subcellular location is the cell membrane. Essential transporter for growth and development under abiotic stress. Mediates shoot branching by promoting the outgrowth of lateral shoots. Required for salt tolerance via Na/K homeostasis, at least partly by regulating SKC1/OsHKT1;5. Necessary for hypodermal suberization of roots, which contributes to formation of the apoplastic barrier. The sequence is that of ABC transporter G family member 5 from Oryza sativa subsp. japonica (Rice).